An 878-amino-acid chain; its full sequence is Calcium-transporting ATPase 1 (878 aa).

4 consecutive transmembrane segments (helical) span residues 50-72 (LFID…VQLF), 76-95 (FVES…VAVV), 243-263 (LGWV…LRLF), and 281-301 (FAVA…VTIV). 4 residues coordinate Ca(2+): Val287, Ala288, Ile290, and Glu292. Residue Asp334 is the 4-aspartylphosphate intermediate of the active site. Helical transmembrane passes span 681–701 (LFSG…VGWV), 704–724 (FTAL…AIAL), 753–773 (VILI…YVGQ), 779–799 (MGVA…TFAA), 816–836 (YVLM…LPFL), and 845–865 (AFGW…VICM). Ca(2+)-binding residues include Asn713 and Asp717.

It belongs to the cation transport ATPase (P-type) (TC 3.A.3) family. Type IIA subfamily.

The protein resides in the cell membrane. It carries out the reaction Ca(2+)(in) + ATP + H2O = Ca(2+)(out) + ADP + phosphate + H(+). Its activity is regulated as follows. Inhibited by very high concentrations of cyclopiazonic acid (CPA). Functionally, catalyzes the hydrolysis of ATP coupled with the transport of calcium. The polypeptide is Calcium-transporting ATPase 1 (yoaB) (Lactococcus lactis subsp. lactis (strain IL1403) (Streptococcus lactis)).